We begin with the raw amino-acid sequence, 157 residues long: 2-C-methyl-D-erythritol 2,4-cyclodiphosphate synthase (157 aa).

A divalent metal cation contacts are provided by Asp-8 and His-10. Residues 8–10 and 34–35 each bind 4-CDP-2-C-methyl-D-erythritol 2-phosphate; these read DIH and HS. A divalent metal cation is bound at residue His-42. 4-CDP-2-C-methyl-D-erythritol 2-phosphate-binding positions include 56–58, 61–65, 132–135, and Arg-142; these read DIG, FPDTD, and TTNE.

This sequence belongs to the IspF family. In terms of assembly, homotrimer. A divalent metal cation serves as cofactor.

It catalyses the reaction 4-CDP-2-C-methyl-D-erythritol 2-phosphate = 2-C-methyl-D-erythritol 2,4-cyclic diphosphate + CMP. Its pathway is isoprenoid biosynthesis; isopentenyl diphosphate biosynthesis via DXP pathway; isopentenyl diphosphate from 1-deoxy-D-xylulose 5-phosphate: step 4/6. In terms of biological role, involved in the biosynthesis of isopentenyl diphosphate (IPP) and dimethylallyl diphosphate (DMAPP), two major building blocks of isoprenoid compounds. Catalyzes the conversion of 4-diphosphocytidyl-2-C-methyl-D-erythritol 2-phosphate (CDP-ME2P) to 2-C-methyl-D-erythritol 2,4-cyclodiphosphate (ME-CPP) with a corresponding release of cytidine 5-monophosphate (CMP). The polypeptide is 2-C-methyl-D-erythritol 2,4-cyclodiphosphate synthase (Chloroherpeton thalassium (strain ATCC 35110 / GB-78)).